Here is a 243-residue protein sequence, read N- to C-terminus: Protein unc-119 homolog B (243 aa).

A compositionally biased stretch (polar residues) spans 1-21 (MNSQSSRNETAATAVNGSDSA). Residues 1-49 (MNSQSSRNETAATAVNGSDSAAASRDHKSGGGVLKRLKSRRNQVDRRPV) form a disordered region. Tetradecanoate is bound at residue tyrosine 134.

This sequence belongs to the PDE6D/unc-119 family. Detected in embryo. Detected in larvae four days after fertilization, in retina and neural tissues (at protein level). Detected in embryos at the sphere stage, during gastrulation, somitogenesis and in swimming larvae, both within and outside of the developing nervous system. Detected in adults.

It is found in the cell projection. The protein localises to the cilium. Functionally, myristoyl-binding protein that acts as a cargo adapter: specifically binds the myristoyl moiety of a subset of N-terminally myristoylated proteins and is required for their localization. Plays a key role in localization of proteins to the primary cilium membrane. This is Protein unc-119 homolog B (unc119b) from Danio rerio (Zebrafish).